The primary structure comprises 370 residues: tRNA-specific 2-thiouridylase MnmA (370 aa).

Residues 25-32 (ALSGGVDS) and Leu51 contribute to the ATP site. Catalysis depends on Cys112, which acts as the Nucleophile. An intrachain disulfide couples Cys112 to Cys211. Residue Gly137 coordinates ATP. Residues 161 to 163 (KDQ) form an interaction with tRNA region. Cys211 serves as the catalytic Cysteine persulfide intermediate. Positions 316-317 (RY) are interaction with tRNA.

It belongs to the MnmA/TRMU family.

It is found in the cytoplasm. It catalyses the reaction S-sulfanyl-L-cysteinyl-[protein] + uridine(34) in tRNA + AH2 + ATP = 2-thiouridine(34) in tRNA + L-cysteinyl-[protein] + A + AMP + diphosphate + H(+). Its function is as follows. Catalyzes the 2-thiolation of uridine at the wobble position (U34) of tRNA, leading to the formation of s(2)U34. In Synechococcus sp. (strain JA-3-3Ab) (Cyanobacteria bacterium Yellowstone A-Prime), this protein is tRNA-specific 2-thiouridylase MnmA.